A 243-amino-acid polypeptide reads, in one-letter code: Ribonuclease PH (243 aa).

Residues R91 and 129 to 131 (GTR) contribute to the phosphate site.

Belongs to the RNase PH family. Homohexameric ring arranged as a trimer of dimers.

It carries out the reaction tRNA(n+1) + phosphate = tRNA(n) + a ribonucleoside 5'-diphosphate. Functionally, phosphorolytic 3'-5' exoribonuclease that plays an important role in tRNA 3'-end maturation. Removes nucleotide residues following the 3'-CCA terminus of tRNAs; can also add nucleotides to the ends of RNA molecules by using nucleoside diphosphates as substrates, but this may not be physiologically important. Probably plays a role in initiation of 16S rRNA degradation (leading to ribosome degradation) during starvation. This is Ribonuclease PH from Burkholderia pseudomallei (strain 668).